The following is a 1001-amino-acid chain: E3 ubiquitin-protein ligase BRE1B (1001 aa).

A disordered region spans residues 1 to 40 (MSGLSNKRAAGDGGSGPPEKKMNREEKTTTTLIEPIRLGG). Over residues 18–28 (PEKKMNREEKT) the composition is skewed to basic and acidic residues. Residue Lys-20 is modified to N6-acetyllysine. Ser-42 carries the post-translational modification Phosphoserine. The stretch at 55–91 (KNKKLAERLEQRQACEDELRERIEKLEKRQATDDATL) forms a coiled coil. A disordered region spans residues 122–142 (TEVPGCQEGLTRDVIPRPDPG). Coiled coils occupy residues 189–377 (KAAV…LRSL) and 437–525 (LQKK…ASGS). An N6-acetyllysine mark is found at Lys-355 and Lys-517. The interval 519–647 (RAQASGSSHC…KAKVEEAKRK (129 aa)) is disordered. The span at 565–576 (ALLAGATSATSS) shows a compositional bias: low complexity. Residues Lys-578 and Lys-579 each participate in a glycyl lysine isopeptide (Lys-Gly) (interchain with G-Cter in SUMO2) cross-link. Phosphoserine occurs at positions 584 and 585. Composition is skewed to basic and acidic residues over residues 602–619 (RGREPEARPKRELREREG) and 633–647 (RADREKAKVEEAKRK). Residues 627 to 946 (AASTLSRADR…EEIKEYKARL (320 aa)) are a coiled coil. The RING-type zinc-finger motif lies at 948 to 987 (CPCCNTRKKDAVLTKCFHVFCFECVRGRYEARQRKCPKCN).

The protein belongs to the BRE1 family. As to quaternary structure, component of the RNF20/40 complex (also known as BRE1 complex) probably composed of 2 copies of RNF20/BRE1A and 2 copies of RNF40/BRE1B. Interacts with UBE2E1/UBCH6. Interacts with RB1 and WAC.

The protein localises to the nucleus. The catalysed reaction is S-ubiquitinyl-[E2 ubiquitin-conjugating enzyme]-L-cysteine + [acceptor protein]-L-lysine = [E2 ubiquitin-conjugating enzyme]-L-cysteine + N(6)-ubiquitinyl-[acceptor protein]-L-lysine.. The protein operates within protein modification; protein ubiquitination. Its function is as follows. Component of the RNF20/40 E3 ubiquitin-protein ligase complex that mediates monoubiquitination of 'Lys-120' of histone H2B (H2BK120ub1). H2BK120ub1 gives a specific tag for epigenetic transcriptional activation and is also prerequisite for histone H3 'Lys-4' and 'Lys-79' methylation (H3K4me and H3K79me, respectively). It thereby plays a central role in histone code and gene regulation. The RNF20/40 complex forms a H2B ubiquitin ligase complex in cooperation with the E2 enzyme UBE2A or UBE2B; reports about the cooperation with UBE2E1/UBCH are contradictory. Required for transcriptional activation of Hox genes. The protein is E3 ubiquitin-protein ligase BRE1B (Rnf40) of Mus musculus (Mouse).